The chain runs to 79 residues: Probable 26S proteasome complex subunit sem1 (79 aa).

Positions Met-1 to Asp-21 are enriched in basic and acidic residues. Residues Met-1–Glu-30 form a disordered region. Phosphoserine is present on Ser-19.

Belongs to the DSS1/SEM1 family. In terms of assembly, part of the 26S proteasome.

Functionally, subunit of the 26S proteasome which plays a role in ubiquitin-dependent proteolysis. The protein is Probable 26S proteasome complex subunit sem1 of Drosophila melanogaster (Fruit fly).